The sequence spans 257 residues: Glutamate racemase (257 aa).

Substrate-binding positions include 12-13 (DS) and 44-45 (YG). The Proton donor/acceptor role is filled by C75. 76–77 (NT) provides a ligand contact to substrate. C185 serves as the catalytic Proton donor/acceptor. A substrate-binding site is contributed by 186-187 (TH).

This sequence belongs to the aspartate/glutamate racemases family.

The catalysed reaction is L-glutamate = D-glutamate. It functions in the pathway cell wall biogenesis; peptidoglycan biosynthesis. Provides the (R)-glutamate required for cell wall biosynthesis. This is Glutamate racemase from Clostridium botulinum (strain Kyoto / Type A2).